Reading from the N-terminus, the 211-residue chain is Small ribosomal subunit protein bS6c alpha (211 aa).

Low complexity predominate over residues Met-1 to Leu-19. Disordered regions lie at residues Met-1 to Pro-25 and Asp-80 to Gln-100. A chloroplast-targeting transit peptide spans Met-1–Leu-65.

It belongs to the bacterial ribosomal protein bS6 family. Component of the chloroplast small ribosomal subunit (SSU). Mature 70S chloroplast ribosomes of higher plants consist of a small (30S) and a large (50S) subunit. The 30S small subunit contains 1 molecule of ribosomal RNA (16S rRNA) and 24 different proteins. The 50S large subunit contains 3 rRNA molecules (23S, 5S and 4.5S rRNA) and 33 different proteins.

It is found in the plastid. It localises to the chloroplast. Component of the chloroplast ribosome (chloro-ribosome), a dedicated translation machinery responsible for the synthesis of chloroplast genome-encoded proteins, including proteins of the transcription and translation machinery and components of the photosynthetic apparatus. The chain is Small ribosomal subunit protein bS6c alpha (RPS6) from Spinacia oleracea (Spinach).